A 243-amino-acid polypeptide reads, in one-letter code: Pyridoxine 5'-phosphate synthase (243 aa).

A 3-amino-2-oxopropyl phosphate-binding site is contributed by Asn-6. 8–9 contacts 1-deoxy-D-xylulose 5-phosphate; that stretch reads DH. Arg-17 provides a ligand contact to 3-amino-2-oxopropyl phosphate. His-42 functions as the Proton acceptor in the catalytic mechanism. 1-deoxy-D-xylulose 5-phosphate is bound by residues Arg-44 and His-49. The active-site Proton acceptor is the Glu-72. Thr-102 is a 1-deoxy-D-xylulose 5-phosphate binding site. His-192 functions as the Proton donor in the catalytic mechanism. Residues Gly-193 and 214-215 contribute to the 3-amino-2-oxopropyl phosphate site; that span reads GH.

The protein belongs to the PNP synthase family. Homooctamer; tetramer of dimers.

It localises to the cytoplasm. The enzyme catalyses 3-amino-2-oxopropyl phosphate + 1-deoxy-D-xylulose 5-phosphate = pyridoxine 5'-phosphate + phosphate + 2 H2O + H(+). The protein operates within cofactor biosynthesis; pyridoxine 5'-phosphate biosynthesis; pyridoxine 5'-phosphate from D-erythrose 4-phosphate: step 5/5. Catalyzes the complicated ring closure reaction between the two acyclic compounds 1-deoxy-D-xylulose-5-phosphate (DXP) and 3-amino-2-oxopropyl phosphate (1-amino-acetone-3-phosphate or AAP) to form pyridoxine 5'-phosphate (PNP) and inorganic phosphate. The chain is Pyridoxine 5'-phosphate synthase from Sulfurihydrogenibium sp. (strain YO3AOP1).